Here is a 513-residue protein sequence, read N- to C-terminus: 5-aminolevulinate synthase, erythroid-specific, mitochondrial (513 aa).

The N-terminal 18 residues, 1-18 (MAAFLRCPLLARHPPLAR), are a transit peptide targeting the mitochondrion. A succinyl-CoA-binding site is contributed by Arg-98. Pyridoxal 5'-phosphate contacts are provided by Cys-190 and Phe-191. Residues Ser-212 and Lys-231 each contribute to the succinyl-CoA site. Pyridoxal 5'-phosphate is bound by residues Ser-264, His-292, and Thr-320. Lys-323 is a catalytic residue. N6-(pyridoxal phosphate)lysine is present on Lys-323. Pyridoxal 5'-phosphate contacts are provided by Thr-352 and Thr-353. Residue Thr-437 participates in succinyl-CoA binding.

Belongs to the class-II pyridoxal-phosphate-dependent aminotransferase family. Homodimer. Pyridoxal 5'-phosphate is required as a cofactor. As to expression, erythroid-specific.

It localises to the mitochondrion inner membrane. It catalyses the reaction succinyl-CoA + glycine + H(+) = 5-aminolevulinate + CO2 + CoA. The protein operates within porphyrin-containing compound metabolism; protoporphyrin-IX biosynthesis; 5-aminolevulinate from glycine: step 1/1. Catalyzes the pyridoxal 5'-phosphate (PLP)-dependent condensation of succinyl-CoA and glycine to form aminolevulinic acid (ALA), with CoA and CO2 as by-products. Contributes significantly to heme formation during erythropoiesis. This Gallus gallus (Chicken) protein is 5-aminolevulinate synthase, erythroid-specific, mitochondrial (ALAS2).